A 345-amino-acid polypeptide reads, in one-letter code: N-acetyl-gamma-glutamyl-phosphate reductase (345 aa).

Residue Cys-149 is part of the active site.

The protein belongs to the NAGSA dehydrogenase family. Type 1 subfamily.

The protein localises to the cytoplasm. It carries out the reaction N-acetyl-L-glutamate 5-semialdehyde + phosphate + NADP(+) = N-acetyl-L-glutamyl 5-phosphate + NADPH + H(+). It functions in the pathway amino-acid biosynthesis; L-arginine biosynthesis; N(2)-acetyl-L-ornithine from L-glutamate: step 3/4. Its function is as follows. Catalyzes the NADPH-dependent reduction of N-acetyl-5-glutamyl phosphate to yield N-acetyl-L-glutamate 5-semialdehyde. This is N-acetyl-gamma-glutamyl-phosphate reductase from Desulforapulum autotrophicum (strain ATCC 43914 / DSM 3382 / VKM B-1955 / HRM2) (Desulfobacterium autotrophicum).